An 85-amino-acid polypeptide reads, in one-letter code: Phosphocarrier protein HPr (85 aa).

In terms of domain architecture, HPr spans 1 to 85; that stretch reads MFQRDIKITT…DLAKFLTTLK (85 aa). Histidine 15 (pros-phosphohistidine intermediate) is an active-site residue.

Belongs to the HPr family.

It localises to the cytoplasm. Its function is as follows. General (non sugar-specific) component of the phosphoenolpyruvate-dependent sugar phosphotransferase system (sugar PTS). This major carbohydrate active-transport system catalyzes the phosphorylation of incoming sugar substrates concomitantly with their translocation across the cell membrane. The phosphoryl group from phosphoenolpyruvate (PEP) is transferred to the phosphoryl carrier protein HPr by enzyme I. Phospho-HPr then transfers it to the PTS EIIA domain. In Buchnera aphidicola subsp. Baizongia pistaciae (strain Bp), this protein is Phosphocarrier protein HPr (ptsH).